We begin with the raw amino-acid sequence, 456 residues long: Tyrosinase-like protein (456 aa).

A signal peptide spans 1–22 (MNTMTLLGKVFLLQFLIGVGFC). The Cu cation site is built by His-145, His-154, His-163, His-295, His-299, and His-322.

Belongs to the tyrosinase family. Requires Cu(2+) as cofactor. Prismatic layer of shell (at protein level).

It localises to the secreted. The polypeptide is Tyrosinase-like protein (Pinctada maxima (Silver-lipped pearl oyster)).